The sequence spans 1086 residues: NAD(P) transhydrogenase, mitochondrial (1086 aa).

A mitochondrion-targeting transit peptide spans 1–43; it reads MAHLLKTVVAGCSCPFLSNLGSSKVLPGKRDFVRTLRTHQALW. Topologically, residues 44–474 are mitochondrial matrix; it reads CKSPVKPGIP…TVSMYTKTLT (431 aa). Residue lysine 70 is modified to N6-acetyllysine. An N6-succinyllysine modification is found at lysine 117. Position 182–184 (182–184) interacts with NAD(+); sequence RVT. The residue at position 224 (lysine 224) is an N6-succinyllysine. NAD(+) is bound by residues valine 237, 257–259, and glycine 287; that span reads DTR. Lysine 294 is subject to N6-succinyllysine. Positions 300 and 319 each coordinate NAD(+). The residue at position 331 (lysine 331) is an N6-succinyllysine. The residue at position 397 (lysine 397) is an N6-acetyllysine. 4 helical membrane passes run 475–493, 501–521, 527–546, and 558–578; these read TASVYSAGLTGMLGLGIVA, MVTTFGLAGIIGYHTVWGVTP, LMSVTNAISGLTAVGGLALM, and SLAALATFISSVNIAGGFLVT. Residues 579–595 are Mitochondrial matrix-facing; the sequence is QRMLDMFKRPTDPPEYN. Helical transmembrane passes span 596 to 616, 622 to 642, 646 to 666, 672 to 691, and 702 to 722; these read YLYLLPGGTFVGGYLAALYGG, IMYLGSGLCCVGALGGLSTQG, LGNALGMIGVAGGLAATLGGL, LLAQMSGAMAMGGTIGLTIA, and LVAAFHSLVGLAAVLTCMAEY. The Cytoplasmic portion of the chain corresponds to 723–739; it reads IVEYPHFAMDATSNFTK. A run of 5 helical transmembrane segments spans residues 740–760, 778–797, 801–819, 833–853, and 857–879; these read IVAYLGTYIGGVTFSGSLVAY, HALNAGLLAASVGGIIPFMA, FTTGITCLGSVSGLSTLMG, VVITVLNSYSGWALCAEGFLL, and LLTIVGALIGSSGAILSYIMCVA. Residues 880 to 1086 lie on the Mitochondrial matrix side of the membrane; sequence MNRSLANVIL…QAKVRESYQK (207 aa). NADP(+) is bound by residues tyrosine 933, 965 to 970, 1007 to 1011, 1026 to 1027, 1042 to 1049, and 1068 to 1069; these read VAGRMP, GANDT, GM, KRSLGVGY, and DA. Lysine 1079 is modified (N6-succinyllysine).

The protein in the N-terminal section; belongs to the AlaDH/PNT family. It in the C-terminal section; belongs to the PNT beta subunit family. As to quaternary structure, homodimer. Widely expressed with expression most readily detectable in adrenal, heart, kidney, thyroid and adipose tissues.

The protein resides in the mitochondrion inner membrane. It carries out the reaction NAD(+) + NADPH + H(+)(in) = NADH + NADP(+) + H(+)(out). In terms of biological role, the transhydrogenation between NADH and NADP is coupled to respiration and ATP hydrolysis and functions as a proton pump across the membrane. May play a role in reactive oxygen species (ROS) detoxification in the adrenal gland. This is NAD(P) transhydrogenase, mitochondrial (Nnt) from Mus musculus (Mouse).